We begin with the raw amino-acid sequence, 429 residues long: Kynureninase (429 aa).

Pyridoxal 5'-phosphate-binding positions include leucine 109, threonine 110, 137–140, aspartate 222, histidine 225, and tyrosine 247; that span reads FPSD. Position 248 is an N6-(pyridoxal phosphate)lysine (lysine 248). The pyridoxal 5'-phosphate site is built by tryptophan 278 and asparagine 306.

This sequence belongs to the kynureninase family. As to quaternary structure, homodimer. Pyridoxal 5'-phosphate serves as cofactor.

It catalyses the reaction L-kynurenine + H2O = anthranilate + L-alanine + H(+). The enzyme catalyses 3-hydroxy-L-kynurenine + H2O = 3-hydroxyanthranilate + L-alanine + H(+). The protein operates within amino-acid degradation; L-kynurenine degradation; L-alanine and anthranilate from L-kynurenine: step 1/1. Its pathway is cofactor biosynthesis; NAD(+) biosynthesis; quinolinate from L-kynurenine: step 2/3. Catalyzes the cleavage of L-kynurenine (L-Kyn) and L-3-hydroxykynurenine (L-3OHKyn) into anthranilic acid (AA) and 3-hydroxyanthranilic acid (3-OHAA), respectively. The sequence is that of Kynureninase from Salinispora tropica (strain ATCC BAA-916 / DSM 44818 / JCM 13857 / NBRC 105044 / CNB-440).